A 547-amino-acid polypeptide reads, in one-letter code: Probable bifunctional tRNA threonylcarbamoyladenosine biosynthesis protein (547 aa).

The kae1 stretch occupies residues Met-1–Trp-329. Positions 113, 117, and 134 each coordinate Fe cation. L-threonylcarbamoyladenylate-binding positions include Tyr-134–Ala-138, Asp-166, Gly-179, Glu-183, and Asn-262. A Fe cation-binding site is contributed by Asp-290. The 208-residue stretch at Glu-340 to Ala-547 folds into the Protein kinase domain. ATP is bound by residues Leu-355 to Ile-363 and Lys-377. The active-site Proton acceptor; for kinase activity is the Asp-464.

The protein in the N-terminal section; belongs to the KAE1 / TsaD family. In the C-terminal section; belongs to the protein kinase superfamily. Tyr protein kinase family. BUD32 subfamily. In terms of assembly, component of the KEOPS complex that consists of Kae1, Bud32, Cgi121 and Pcc1; the whole complex dimerizes. Fe(2+) is required as a cofactor.

Its subcellular location is the cytoplasm. The enzyme catalyses L-seryl-[protein] + ATP = O-phospho-L-seryl-[protein] + ADP + H(+). It carries out the reaction L-threonyl-[protein] + ATP = O-phospho-L-threonyl-[protein] + ADP + H(+). It catalyses the reaction L-threonylcarbamoyladenylate + adenosine(37) in tRNA = N(6)-L-threonylcarbamoyladenosine(37) in tRNA + AMP + H(+). Functionally, required for the formation of a threonylcarbamoyl group on adenosine at position 37 (t(6)A37) in tRNAs that read codons beginning with adenine. Is a component of the KEOPS complex that is probably involved in the transfer of the threonylcarbamoyl moiety of threonylcarbamoyl-AMP (TC-AMP) to the N6 group of A37. The Kae1 domain likely plays a direct catalytic role in this reaction. The Bud32 domain probably displays kinase activity that regulates Kae1 function. The protein is Probable bifunctional tRNA threonylcarbamoyladenosine biosynthesis protein of Methanosarcina acetivorans (strain ATCC 35395 / DSM 2834 / JCM 12185 / C2A).